The chain runs to 157 residues: Endoribonuclease YbeY (157 aa).

3 residues coordinate Zn(2+): His114, His118, and His124.

Belongs to the endoribonuclease YbeY family. Requires Zn(2+) as cofactor.

It localises to the cytoplasm. Its function is as follows. Single strand-specific metallo-endoribonuclease involved in late-stage 70S ribosome quality control and in maturation of the 3' terminus of the 16S rRNA. The chain is Endoribonuclease YbeY from Salmonella typhimurium (strain LT2 / SGSC1412 / ATCC 700720).